The chain runs to 395 residues: Bone morphogenetic protein 2 (395 aa).

The N-terminal stretch at 1–23 (MVAGTRCLLALLLPQVLLGGAAG) is a signal peptide. Residues 24 to 281 (LIPELGRRKF…GHPLHRREKR (258 aa)) constitute a propeptide, cleaved by PCSK5. Serine 86 carries the post-translational modification Phosphoserine. N-linked (GlcNAc...) asparagine glycans are attached at residues asparagine 134 and asparagine 199. Residues 270-292 (GKGHPLHRREKRQAKHKQRKRLK) form a disordered region. Residues 273-292 (HPLHRREKRQAKHKQRKRLK) are compositionally biased toward basic residues. 3 disulfide bridges follow: cysteine 295/cysteine 360, cysteine 324/cysteine 392, and cysteine 328/cysteine 394. Asparagine 337 is a glycosylation site (N-linked (GlcNAc...) asparagine).

It belongs to the TGF-beta family. Homodimer; disulfide-linked. Interacts with SOSTDC1. Interacts with GREM2, RGMA, RGMB and RGMC. Interacts with ASPN. Interacts with MAFP5. Interacts with FBN1 (via N-terminal domain) and FBN2. Interacts with type I receptor BMPR1A. Interacts with type II receptor BMPR2. Interacts with SCUBE3. Interacts with TNFAIP6 (primarily via Link domain); this interaction is inhibited by hyaluronan. Interacts with ERFE. Interacts with BMPR1A/ALK3; the interaction may induce HAMP expression. Forms heterodimers with BMP6 in vitro; the heterodimer then binds to its receptor BMPR1A /ALK3 and may induce HAMP expression. Interacts with TGFBR3.

It localises to the secreted. Growth factor of the TGF-beta superfamily that plays essential roles in many developmental processes, including cardiogenesis, neurogenesis, and osteogenesis. Induces cartilage and bone formation. Initiates the canonical BMP signaling cascade by associating with type I receptor BMPR1A and type II receptor BMPR2. Once all three components are bound together in a complex at the cell surface, BMPR2 phosphorylates and activates BMPR1A. In turn, BMPR1A propagates signal by phosphorylating SMAD1/5/8 that travel to the nucleus and act as activators and repressors of transcription of target genes. Also acts to promote expression of HAMP, via the interaction with its receptor BMPR1A/ALK3. Can also signal through non-canonical pathways such as ERK/MAP kinase signaling cascade that regulates osteoblast differentiation. Also stimulates the differentiation of myoblasts into osteoblasts via the EIF2AK3-EIF2A-ATF4 pathway by stimulating EIF2A phosphorylation which leads to increased expression of ATF4 which plays a central role in osteoblast differentiation. Acts as a positive regulator of odontoblast differentiation during mesenchymal tooth germ formation, expression is repressed during the bell stage by MSX1-mediated inhibition of CTNNB1 signaling. This Oryctolagus cuniculus (Rabbit) protein is Bone morphogenetic protein 2 (BMP2).